Here is an 840-residue protein sequence, read N- to C-terminus: UPF0508 protein SCY_2952 (840 aa).

It belongs to the UPF0508 family.

The chain is UPF0508 protein SCY_2952 from Saccharomyces cerevisiae (strain YJM789) (Baker's yeast).